A 900-amino-acid polypeptide reads, in one-letter code: Phospholipase DDHD1 (900 aa).

Disordered stretches follow at residues 1 to 28 (MNYPGRGSPRSPEHNGRGGGGGAWELGS), 100 to 152 (LRYY…GGPA), and 202 to 233 (GARPQGGDRDGDHVCSPTGPASSSGEDDDEDR). Phosphoserine is present on residues Ser8 and Ser11. Residues 130–140 (SGGGGATGGSP) are compositionally biased toward gly residues. The active site involves Ser537. The 276-residue stretch at 611-886 (LKFKVENFFC…ALFLLTFMYK (276 aa)) folds into the DDHD domain. Disordered stretches follow at residues 706 to 725 (AKEPTSVSENEGISTIPSPV) and 768 to 801 (SSTTQSSETSKDSMEDEKKPVASPSATTVGTQTL). Residues 710 to 725 (TSVSENEGISTIPSPV) are compositionally biased toward polar residues. Ser723 bears the Phosphoserine mark. Basic and acidic residues predominate over residues 776–787 (TSKDSMEDEKKP). Positions 791 to 801 (PSATTVGTQTL) are enriched in polar residues.

The protein belongs to the PA-PLA1 family. Forms homooligomers and, to a much smaller extent, heterooligomers with DDHD2. In terms of tissue distribution, highly expressed in testis. Also expressed in brain, spleen and lung. Only expressed in cerebellum in fetal brain.

The protein localises to the cytoplasm. The catalysed reaction is a 1,2-diacyl-sn-glycero-3-phosphate + H2O = a 2-acyl-sn-glycerol 3-phosphate + a fatty acid + H(+). It carries out the reaction a 1,2-diacyl-sn-glycero-3-phospho-(1D-myo-inositol) + H2O = a 2-acyl-sn-glycero-3-phospho-D-myo-inositol + a fatty acid + H(+). It catalyses the reaction 1-octadecanoyl-2-(5Z,8Z,11Z,14Z-eicosatetraenoyl)-sn-glycero-3-phospho-(1D-myo-inositol) + H2O = 2-(5Z,8Z,11Z,14Z-eicosatetraenoyl)-sn-glycero-3-phospho-(1D-myo-inositol) + octadecanoate + H(+). The enzyme catalyses a 1-acyl-2-(5Z,8Z,11Z,14Z-eicosatetraenoyl)-sn-glycero-3-phospho-(1D-myo-inositol) + H2O = 2-(5Z,8Z,11Z,14Z-eicosatetraenoyl)-sn-glycero-3-phospho-(1D-myo-inositol) + a fatty acid + H(+). The catalysed reaction is 1,2-dihexadecanoyl-sn-glycero-3-phospho-(1D-myo-inositol) + H2O = 2-hexadecanoyl-sn-glycero-3-phospho-(1D-myo-inositol) + hexadecanoate + H(+). It carries out the reaction a 1-acyl-2-(5Z,8Z,11Z,14Z)-eicosatetraenoyl-sn-glycero-3-phosphate + H2O = 2-(5Z,8Z,11Z,14Z-eicosatetraenoyl)-sn-glycero-3-phosphate + a fatty acid + H(+). It catalyses the reaction 1,2-di-(9Z-octadecenoyl)-sn-glycero-3-phosphate + H2O = 2-(9Z-octadecenoyl)-sn-glycero-3-phosphate + (9Z)-octadecenoate + H(+). The enzyme catalyses 1-hexadecanoyl-2-(9Z-octadecenoyl)-sn-glycero-3-phosphate + H2O = 2-(9Z-octadecenoyl)-sn-glycero-3-phosphate + hexadecanoate + H(+). The catalysed reaction is 1-hexadecanoyl-2-(9Z-octadecenoyl)-sn-glycero-3-phospho-L-serine + H2O = 2-(9Z-octadecenoyl)-sn-glycero-3-phospho-L-serine + hexadecanoate + H(+). It carries out the reaction 1,2-di-(5Z,8Z,11Z,14Z)-eicosatetraenoyl-sn-glycero-3-phosphate + H2O = 2-(5Z,8Z,11Z,14Z-eicosatetraenoyl)-sn-glycero-3-phosphate + (5Z,8Z,11Z,14Z)-eicosatetraenoate + H(+). It catalyses the reaction 1-octadecanoyl-2-(5Z,8Z,11Z,14Z-eicosatetraenoyl)-sn-glycero-3-phosphate + H2O = 2-(5Z,8Z,11Z,14Z-eicosatetraenoyl)-sn-glycero-3-phosphate + octadecanoate + H(+). The enzyme catalyses a 1,2-diacyl-sn-glycero-3-phosphocholine + H2O = a 2-acyl-sn-glycero-3-phosphocholine + a fatty acid + H(+). The catalysed reaction is a 1,2-diacyl-sn-glycero-3-phosphoethanolamine + H2O = a 2-acyl-sn-glycero-3-phosphoethanolamine + a fatty acid + H(+). It carries out the reaction a 1,2-diacyl-sn-glycero-3-phospho-L-serine + H2O = a 2-acyl-sn-glycero-3-phospho-L-serine + a fatty acid + H(+). It catalyses the reaction a 1,2-diacyl-sn-glycero-3-phospho-(1'-sn-glycerol) + H2O = 2-acyl-sn-glycero-3-phospho-(1'-sn-glycerol) + a fatty acid + H(+). The enzyme catalyses 1-hexadecanoyl-2-(9Z-octadecenoyl)-sn-glycero-3-phospho-(1'-sn-glycerol) + H2O = 2-(9Z-octadecenoyl)-sn-glycero-3-phospho-(1'-sn-glycerol) + hexadecanoate + H(+). The catalysed reaction is 1-acyl-2-(5Z,8Z,11Z,14Z-eicosatetraenoyl)-sn-glycero-3-phosphocholine + H2O = 2-(5Z,8Z,11Z,14Z)-eicosatetraenoyl-sn-glycero-3-phosphocholine + a fatty acid + H(+). It carries out the reaction 1-acyl-2-(5Z,8Z,11Z,14Z)-eicosatetraenoyl-sn-glycero-3-phosphoethanolamine + H2O = 2-(5Z,8Z,11Z,14Z)-eicosatetraenoyl-sn-glycero-3-phosphoethanolamine + a fatty acid + H(+). It catalyses the reaction 1-(9Z-octadecenoyl)-2-(7Z,10Z,13Z,16Z,19Z-docosapentaenoyl)-sn-glycero-3-phospho-1D-myo-inositol + H2O = 2-(7Z,10Z,13Z,16Z,19Z-docosapentaenoyl)-sn-glycero-3-phospho-1D-myo-inositol + (9Z)-octadecenoate + H(+). The enzyme catalyses 1-(9Z-octadecenoyl)-2-(5Z,8Z,11Z,14Z-eicosatetraenoyl)-sn-glycero-3-phospho-1D-myo-inositol + H2O = 2-(5Z,8Z,11Z,14Z-eicosatetraenoyl)-sn-glycero-3-phospho-(1D-myo-inositol) + (9Z)-octadecenoate + H(+). The catalysed reaction is 1,2-di-(9Z-octadecenoyl)-sn-glycero-3-phospho-1D-myo-inositol + H2O = 2-(9Z-octadecenoyl)-sn-glycero-3-phospho-1D-myo-inositol + (9Z)-octadecenoate + H(+). It carries out the reaction 1-(9Z-octadecenoyl)-2-(8Z,11Z,14Z-eicosatrienoyl)-sn-glycero-3-phospho-1D-myo-inositol + H2O = 2-(8Z,11Z,14Z-eicosatrienoyl)-sn-glycero-3-phospho-1D-myo-inositol + (9Z)-octadecenoate + H(+). It catalyses the reaction 1,2-di-(9Z-octadecenoyl)-sn-glycero-3-phosphocholine + H2O = (9Z-octadecenoyl)-sn-glycero-3-phosphocholine + (9Z)-octadecenoate + H(+). The protein operates within phospholipid metabolism; phosphatidylinositol metabolism. Its activity is regulated as follows. Phosphatidate (1,2-diacyl-sn-glycero-3-phosphate, PA) can positively regulate phospholipase A1 activity. Its function is as follows. Phospholipase A1 (PLA1) that hydrolyzes ester bonds at the sn-1 position of glycerophospholipids producing a free fatty acid and a lysophospholipid. Prefers phosphatidate (1,2-diacyl-sn-glycero-3-phosphate, PA) as substrate in vitro, but can efficiently hydrolyze phosphatidylinositol (1,2-diacyl-sn-glycero-3-phospho-(1D-myo-inositol), PI), as well as a range of other glycerophospholipid substrates such as phosphatidylcholine (1,2-diacyl-sn-glycero-3-phosphocholine, PC), phosphatidylethanolamine (1,2-diacyl-sn-glycero-3-phosphoethanolamine, PE), phosphatidylserine (1,2-diacyl-sn-glycero-3-phospho-L-serine, PS) and phosphatidylglycerol (1,2-diacyl-sn-glycero-3-phospho-(1'-sn-glycerol), PG). Involved in the regulation of the endogenous content of polyunsaturated PI and PS lipids in the nervous system. Changes in these lipids extend to downstream metabolic products like PI phosphates PIP and PIP2, which play fundamental roles in cell biology. Regulates mitochondrial morphology. These dynamic changes may be due to PA hydrolysis at the mitochondrial surface. May play a regulatory role in spermatogenesis or sperm function. This chain is Phospholipase DDHD1, found in Homo sapiens (Human).